The following is a 573-amino-acid chain: Protein FAM200A (573 aa).

The disordered stretch occupies residues 1-51 (MTPESRDTTDLSPRGTQEMEGIVVVKVEEEDEEDHFQKQRNKVESSPQVLS). Residues 1–513 (MTPESRDTTD…DEFPLLSRKS (513 aa)) are Extracellular-facing. A helical transmembrane segment spans residues 514–533 (ISLLLPFTTTYLCELGFSIL). The Cytoplasmic portion of the chain corresponds to 534–573 (TRLKTKKRNRLNSAPDMRVALSSCVPDWKELMNRQAHPSH).

This sequence belongs to the FAM200 family.

It is found in the membrane. The chain is Protein FAM200A (FAM200A) from Macaca fascicularis (Crab-eating macaque).